Consider the following 250-residue polypeptide: MTITEIKNLLQGEVSKEQLEELKADERKGVQKLLISYEKRQAKYAKALAQFQSRFSYEKEFWQKDQLVAGVDEVGRGPLAGPVVTAAVILPHDFDLIDVNDSKKLSPKKRQALFPKILEKAVSVSVGLANNDVIDQINIYEADRLAMAHAVQGLKVKPDALLVDAMNVPLNIPQVKLIHGDAKSNSIAAASIVAKVFRDNLMDAYGELYPEYDFKHNAGYGTREHMEALEKYGPTPIHRRSFAPVSEYEK.

One can recognise an RNase H type-2 domain in the interval 66-250 (QLVAGVDEVG…SFAPVSEYEK (185 aa)). A divalent metal cation is bound by residues D72, E73, and D164.

It belongs to the RNase HII family. Mn(2+) is required as a cofactor. Mg(2+) serves as cofactor.

Its subcellular location is the cytoplasm. The catalysed reaction is Endonucleolytic cleavage to 5'-phosphomonoester.. Endonuclease that specifically degrades the RNA of RNA-DNA hybrids. The chain is Ribonuclease HII from Lactobacillus johnsonii (strain CNCM I-12250 / La1 / NCC 533).